The following is a 347-amino-acid chain: Ribosomal RNA small subunit methyltransferase C (347 aa).

Belongs to the methyltransferase superfamily. RsmC family. As to quaternary structure, monomer.

The protein resides in the cytoplasm. The catalysed reaction is guanosine(1207) in 16S rRNA + S-adenosyl-L-methionine = N(2)-methylguanosine(1207) in 16S rRNA + S-adenosyl-L-homocysteine + H(+). Specifically methylates the guanine in position 1207 of 16S rRNA in the 30S particle. The chain is Ribosomal RNA small subunit methyltransferase C from Shewanella baltica (strain OS155 / ATCC BAA-1091).